Here is a 121-residue protein sequence, read N- to C-terminus: Small ribosomal subunit protein uS13 (121 aa).

The segment at 89 to 121 (MRHRRGLPVRGQNTKNNARTRKGKKVSIAGKKK) is disordered. Over residues 106–121 (ARTRKGKKVSIAGKKK) the composition is skewed to basic residues.

This sequence belongs to the universal ribosomal protein uS13 family. In terms of assembly, part of the 30S ribosomal subunit. Forms a loose heterodimer with protein S19. Forms two bridges to the 50S subunit in the 70S ribosome.

In terms of biological role, located at the top of the head of the 30S subunit, it contacts several helices of the 16S rRNA. In the 70S ribosome it contacts the 23S rRNA (bridge B1a) and protein L5 of the 50S subunit (bridge B1b), connecting the 2 subunits; these bridges are implicated in subunit movement. Contacts the tRNAs in the A and P-sites. In Latilactobacillus sakei subsp. sakei (strain 23K) (Lactobacillus sakei subsp. sakei), this protein is Small ribosomal subunit protein uS13.